A 171-amino-acid chain; its full sequence is Shikimate kinase (171 aa).

14 to 19 (GAGKST) is an ATP binding site. Mg(2+) is bound at residue Ser18. Positions 36, 60, and 82 each coordinate substrate. Arg120 contacts ATP. Arg139 lines the substrate pocket. Position 156 (Gln156) interacts with ATP.

Belongs to the shikimate kinase family. As to quaternary structure, monomer. Mg(2+) is required as a cofactor.

It is found in the cytoplasm. The catalysed reaction is shikimate + ATP = 3-phosphoshikimate + ADP + H(+). Its pathway is metabolic intermediate biosynthesis; chorismate biosynthesis; chorismate from D-erythrose 4-phosphate and phosphoenolpyruvate: step 5/7. In terms of biological role, catalyzes the specific phosphorylation of the 3-hydroxyl group of shikimic acid using ATP as a cosubstrate. The polypeptide is Shikimate kinase (Shewanella sp. (strain ANA-3)).